Here is a 485-residue protein sequence, read N- to C-terminus: Glutamate--tRNA ligase (485 aa).

Positions 12 to 22 (PSPTGEPHVGT) match the 'HIGH' region motif. Positions 253-257 (KLSKR) match the 'KMSKS' region motif. Lysine 256 contributes to the ATP binding site.

This sequence belongs to the class-I aminoacyl-tRNA synthetase family. Glutamate--tRNA ligase type 1 subfamily. As to quaternary structure, monomer.

Its subcellular location is the cytoplasm. It carries out the reaction tRNA(Glu) + L-glutamate + ATP = L-glutamyl-tRNA(Glu) + AMP + diphosphate. Catalyzes the attachment of glutamate to tRNA(Glu) in a two-step reaction: glutamate is first activated by ATP to form Glu-AMP and then transferred to the acceptor end of tRNA(Glu). In Sinorhizobium medicae (strain WSM419) (Ensifer medicae), this protein is Glutamate--tRNA ligase.